The sequence spans 104 residues: Phosphoribosyl-ATP pyrophosphatase (104 aa).

It belongs to the PRA-PH family.

The protein localises to the cytoplasm. It catalyses the reaction 1-(5-phospho-beta-D-ribosyl)-ATP + H2O = 1-(5-phospho-beta-D-ribosyl)-5'-AMP + diphosphate + H(+). It participates in amino-acid biosynthesis; L-histidine biosynthesis; L-histidine from 5-phospho-alpha-D-ribose 1-diphosphate: step 2/9. In Streptococcus sanguinis (strain SK36), this protein is Phosphoribosyl-ATP pyrophosphatase.